Consider the following 340-residue polypeptide: Methionine import ATP-binding protein MetN (340 aa).

Residues 8–246 (ISVKNLNKEI…PYSSITEELF (239 aa)) enclose the ABC transporter domain. Residue 40–47 (GHSGSGKS) participates in ATP binding.

It belongs to the ABC transporter superfamily. Methionine importer (TC 3.A.1.24) family. The complex is composed of two ATP-binding proteins (MetN), two transmembrane proteins (MetI) and a solute-binding protein (MetQ).

The protein localises to the cell inner membrane. The enzyme catalyses L-methionine(out) + ATP + H2O = L-methionine(in) + ADP + phosphate + H(+). The catalysed reaction is D-methionine(out) + ATP + H2O = D-methionine(in) + ADP + phosphate + H(+). In terms of biological role, part of the ABC transporter complex MetNIQ involved in methionine import. Responsible for energy coupling to the transport system. This Chlamydia felis (strain Fe/C-56) (Chlamydophila felis) protein is Methionine import ATP-binding protein MetN.